Reading from the N-terminus, the 185-residue chain is uncharacterized protein (185 aa).

The next 5 helical transmembrane spans lie at Thr-4–Ile-24, Leu-54–Ile-74, Leu-98–Asn-118, Val-119–Tyr-139, and Phe-153–Ile-173.

It localises to the cell membrane. This is an uncharacterized protein from Bacillus subtilis (strain 168).